Reading from the N-terminus, the 112-residue chain is Integration host factor subunit alpha (112 aa).

It belongs to the bacterial histone-like protein family. As to quaternary structure, heterodimer of an alpha and a beta chain.

In terms of biological role, this protein is one of the two subunits of integration host factor, a specific DNA-binding protein that functions in genetic recombination as well as in transcriptional and translational control. This is Integration host factor subunit alpha from Rhizobium leguminosarum bv. trifolii (strain WSM2304).